Consider the following 521-residue polypeptide: Jacalin-related lectin 38 (521 aa).

Residues 2–48 (MQPDHDLPYDLEGEILSHLPIQILARFRCVCKRWNTLFKERRFFNSD) form the F-box domain. Kelch repeat units lie at residues 145-190 (KHYK…PYSV), 326-373 (YIYI…ITQH), and 486-521 (MSFVLGGARGSKIIGFYGRSSDLYLTAFGVHFSPLP). A Jacalin-type lectin domain is found at 377 to 519 (SRFAPLRGIQ…LTAFGVHFSP (143 aa)).

Belongs to the jacalin lectin family.

The polypeptide is Jacalin-related lectin 38 (JAL38) (Arabidopsis thaliana (Mouse-ear cress)).